Here is a 619-residue protein sequence, read N- to C-terminus: 4-hydroxyphenylalkanoate adenylyltransferase (619 aa).

Belongs to the ATP-dependent AMP-binding enzyme family.

The catalysed reaction is 17-(4-hydroxyphenyl)heptadecanoate + holo-[(phenol)carboxyphthiodiolenone synthase] + ATP = 17-(4-hydroxyphenyl)heptadecanoyl-[(phenol)carboxyphthiodiolenone synthase] + AMP + diphosphate. It carries out the reaction 19-(4-hydroxyphenyl)nonadecanoate + holo-[(phenol)carboxyphthiodiolenone synthase] + ATP = 19-(4-hydroxyphenyl)nonadecanoyl-[(phenol)carboxyphthiodiolenone synthase] + AMP + diphosphate. Its pathway is lipid metabolism; fatty acid biosynthesis. In terms of biological role, catalyzes the activation of long-chain fatty acids as acyl-adenylates (acyl-AMP), which are then transferred to the multifunctional polyketide synthase PpsA for further chain extension. Involved in the biosynthesis of phenolphthiocerol, which is an important intermediate in the biosynthesis of phenolic glycolipid (PGL), also called mycosid B. This Mycobacterium bovis (strain ATCC BAA-935 / AF2122/97) protein is 4-hydroxyphenylalkanoate adenylyltransferase (fadD29).